Reading from the N-terminus, the 311-residue chain is Malate dehydrogenase (311 aa).

NAD(+) contacts are provided by residues 7–13 (GAAGGIG) and Asp-34. Substrate contacts are provided by Arg-81 and Arg-87. NAD(+) contacts are provided by residues Asn-94 and 117–119 (ITN). Substrate contacts are provided by Asn-119 and Arg-153. Residue His-177 is the Proton acceptor of the active site. Met-227 contacts NAD(+).

The protein belongs to the LDH/MDH superfamily. MDH type 1 family. As to quaternary structure, homodimer.

The catalysed reaction is (S)-malate + NAD(+) = oxaloacetate + NADH + H(+). Functionally, catalyzes the reversible oxidation of malate to oxaloacetate. This chain is Malate dehydrogenase, found in Yersinia enterocolitica serotype O:8 / biotype 1B (strain NCTC 13174 / 8081).